The following is a 501-amino-acid chain: Sodium-coupled neutral amino acid symporter 2 (501 aa).

A disordered region spans residues methionine 1–aspartate 26. The Cytoplasmic segment spans residues methionine 1 to serine 77. The segment at methionine 1–methionine 97 is regulates protein turnover upon amino acid deprivation. A helical membrane pass occupies residues valine 78–methionine 97. Asparagine 83 contributes to the Na(+) binding site. At alanine 98–alanine 103 the chain is on the extracellular side. The helical transmembrane segment at leucine 104–leucine 124 threads the bilayer. Residues lysine 125–asparagine 159 lie on the Cytoplasmic side of the membrane. A helical transmembrane segment spans residues isoleucine 160–isoleucine 178. Residues lysine 179–glycine 189 are Extracellular-facing. Residues histidine 190 to leucine 210 form a helical membrane-spanning segment. Topologically, residues serine 211–tyrosine 218 are cytoplasmic. The helical transmembrane segment at leucine 219–tryptophan 239 threads the bilayer. The Extracellular segment spans residues lysine 240 to threonine 287. A disulfide bond links cysteine 246 and cysteine 276. Asparagine 254 and asparagine 259 each carry an N-linked (GlcNAc...) asparagine glycan. A helical membrane pass occupies residues valine 288–tyrosine 308. Residues glutamate 309–tyrosine 324 are Cytoplasmic-facing. Residues valine 325 to phenylalanine 345 traverse the membrane as a helical segment. Over tyrosine 346–leucine 366 the chain is Extracellular. Residues leucine 367–phenylalanine 387 form a helical membrane-spanning segment. Threonine 381 provides a ligand contact to Na(+). At proline 388–histidine 408 the chain is on the cytoplasmic side. A helical transmembrane segment spans residues cysteine 409–isoleucine 429. The Extracellular portion of the chain corresponds to arginine 430–aspartate 431. Residues isoleucine 432–phenylalanine 452 traverse the membrane as a helical segment. Residues tyrosine 453 to lysine 467 are Cytoplasmic-facing. Residues isoleucine 468–leucine 490 traverse the membrane as a helical segment. Topologically, residues aspartate 491–histidine 501 are extracellular.

Belongs to the amino acid/polyamine transporter 2 family.

The protein resides in the cell membrane. The catalysed reaction is L-alanine(in) + Na(+)(in) = L-alanine(out) + Na(+)(out). It catalyses the reaction glycine(in) + Na(+)(in) = glycine(out) + Na(+)(out). The enzyme catalyses L-serine(in) + Na(+)(in) = L-serine(out) + Na(+)(out). It carries out the reaction L-proline(in) + Na(+)(in) = L-proline(out) + Na(+)(out). The catalysed reaction is L-methionine(in) + Na(+)(in) = L-methionine(out) + Na(+)(out). It catalyses the reaction L-histidine(in) + Na(+)(in) = L-histidine(out) + Na(+)(out). The enzyme catalyses L-asparagine(in) + Na(+)(in) = L-asparagine(out) + Na(+)(out). It carries out the reaction L-glutamine(in) + Na(+)(in) = L-glutamine(out) + Na(+)(out). The catalysed reaction is L-threonine(in) + Na(+)(in) = L-threonine(out) + Na(+)(out). It catalyses the reaction L-leucine(in) + Na(+)(in) = L-leucine(out) + Na(+)(out). The enzyme catalyses L-phenylalanine(in) + Na(+)(in) = L-phenylalanine(out) + Na(+)(out). With respect to regulation, inhibited by N-methyl-D-glucamine. Inhibited by choline. Allosteric regulation of sodium ions binding by pH. Its function is as follows. Symporter that cotransports neutral amino acids and sodium ions from the extracellular to the intracellular side of the cell membrane. The transport is pH-sensitive, Li(+)-intolerant, electrogenic, driven by the Na(+) electrochemical gradient and cotransports of neutral amino acids and sodium ions with a stoichiometry of 1:1. This chain is Sodium-coupled neutral amino acid symporter 2, found in Gallus gallus (Chicken).